The following is a 111-amino-acid chain: Large ribosomal subunit protein eL33x (111 aa).

The protein belongs to the eukaryotic ribosomal protein eL33 family.

This is Large ribosomal subunit protein eL33x (RPL35AD) from Arabidopsis thaliana (Mouse-ear cress).